The following is a 404-amino-acid chain: Histidinol dehydrogenase (404 aa).

NAD(+) contacts are provided by Tyr114, Gln176, and Asn199. Substrate contacts are provided by Ser222, Gln244, and His247. 2 residues coordinate Zn(2+): Gln244 and His247. Active-site proton acceptor residues include Glu300 and His301. The substrate site is built by His301, Asp334, Glu388, and His393. Asp334 is a Zn(2+) binding site. His393 is a Zn(2+) binding site.

It belongs to the histidinol dehydrogenase family. Requires Zn(2+) as cofactor.

It carries out the reaction L-histidinol + 2 NAD(+) + H2O = L-histidine + 2 NADH + 3 H(+). Its pathway is amino-acid biosynthesis; L-histidine biosynthesis; L-histidine from 5-phospho-alpha-D-ribose 1-diphosphate: step 9/9. In terms of biological role, catalyzes the sequential NAD-dependent oxidations of L-histidinol to L-histidinaldehyde and then to L-histidine. The protein is Histidinol dehydrogenase (hisD) of Archaeoglobus fulgidus (strain ATCC 49558 / DSM 4304 / JCM 9628 / NBRC 100126 / VC-16).